The following is a 526-amino-acid chain: Probable feruloyl esterase B-2 (526 aa).

The signal sequence occupies residues methionine 1–alanine 18. Cystine bridges form between cysteine 27-cysteine 74 and cysteine 62-cysteine 113. Residue asparagine 52 is glycosylated (N-linked (GlcNAc...) asparagine). The N-linked (GlcNAc...) asparagine glycan is linked to asparagine 137. 4 cysteine pairs are disulfide-bonded: cysteine 186–cysteine 441, cysteine 255–cysteine 272, cysteine 281–cysteine 291, and cysteine 503–cysteine 525. Serine 187 acts as the Acyl-ester intermediate in catalysis. Asparagine 233 carries an N-linked (GlcNAc...) asparagine glycan. Positions 256, 259, 261, 263, and 265 each coordinate Ca(2+). Catalysis depends on charge relay system residues aspartate 400 and histidine 440. The N-linked (GlcNAc...) asparagine glycan is linked to asparagine 516.

The protein belongs to the tannase family.

Its subcellular location is the secreted. It carries out the reaction feruloyl-polysaccharide + H2O = ferulate + polysaccharide.. Its function is as follows. Involved in degradation of plant cell walls. Hydrolyzes the feruloyl-arabinose ester bond in arabinoxylans as well as the feruloyl-galactose and feruloyl-arabinose ester bonds in pectin. The chain is Probable feruloyl esterase B-2 (faeB-2) from Aspergillus fumigatus (strain ATCC MYA-4609 / CBS 101355 / FGSC A1100 / Af293) (Neosartorya fumigata).